The following is a 405-amino-acid chain: L-carnitine CoA-transferase (405 aa).

The CoA site is built by lysine 97 and arginine 104. Aspartate 169 acts as the Nucleophile in catalysis.

This sequence belongs to the CoA-transferase III family. CaiB subfamily. As to quaternary structure, homodimer.

The protein resides in the cytoplasm. The catalysed reaction is crotonobetainyl-CoA + (R)-carnitine = crotonobetaine + (R)-carnitinyl-CoA. It catalyses the reaction 4-(trimethylamino)butanoyl-CoA + (R)-carnitine = (R)-carnitinyl-CoA + 4-(trimethylamino)butanoate. It participates in amine and polyamine metabolism; carnitine metabolism. Catalyzes the reversible transfer of the CoA moiety from gamma-butyrobetainyl-CoA to L-carnitine to generate L-carnitinyl-CoA and gamma-butyrobetaine. Is also able to catalyze the reversible transfer of the CoA moiety from gamma-butyrobetainyl-CoA or L-carnitinyl-CoA to crotonobetaine to generate crotonobetainyl-CoA. This is L-carnitine CoA-transferase from Escherichia coli (strain 55989 / EAEC).